Consider the following 220-residue polypeptide: Putative amino-acid transporter YisU (220 aa).

The next 6 helical transmembrane spans lie at 15–35, 67–87, 89–109, 128–148, 161–181, and 195–215; these read FFSM…ILPL, TLLI…LPVF, TVMM…TWNI, AFAA…IGVI, WLFM…LAIA, and MLIV…YFGV.

It belongs to the LysE/ArgO transporter (TC 2.A.75) family.

The protein localises to the cell membrane. The sequence is that of Putative amino-acid transporter YisU (yisU) from Bacillus subtilis (strain 168).